A 1744-amino-acid chain; its full sequence is Complement C4-A (1744 aa).

The first 19 residues, 1–19, serve as a signal peptide directing secretion; sequence MRLLWGLIWASSFFTLSLQ. Cys-68 and Cys-97 are joined by a disulfide. The N-linked (GlcNAc...) asparagine glycan is linked to Asn-226. An intrachain disulfide couples Cys-635 to Cys-669. A propeptide spanning residues 676 to 679 is cleaved from the precursor; sequence RKKR. 3 cysteine pairs are disulfide-bonded: Cys-702–Cys-728, Cys-703–Cys-735, and Cys-716–Cys-736. The Anaphylatoxin-like domain maps to 702 to 736; the sequence is CCQDGVTRLPMMRSCEQRAARVQQPDCREPFLSCC. Residue Asn-862 is glycosylated (N-linked (GlcNAc...) asparagine). Residue Ser-918 is modified to Phosphoserine; by FAM20C. A cross-link (isoglutamyl cysteine thioester (Cys-Gln)) is located at residues 1010–1013; it reads CGEQ. Thr-1244 is a glycosylation site (O-linked (GalNAc...) threonine). Asn-1328 is a glycosylation site (N-linked (GlcNAc...) (complex) asparagine). Asn-1391 carries N-linked (GlcNAc...) asparagine glycosylation. Residues Tyr-1417, Tyr-1420, and Tyr-1422 each carry the sulfotyrosine modification. The propeptide occupies 1447–1453; that stretch reads RRNRRRR. Disulfide bonds link Cys-1471/Cys-1535, Cys-1583/Cys-1588, Cys-1595/Cys-1673, Cys-1618/Cys-1742, and Cys-1718/Cys-1727. The NTR domain maps to 1595–1742; that stretch reads CPRQRRALER…FLQEYGTQGC (148 aa).

As to quaternary structure, complement circulates in blood as a disulfide-linked trimer of an alpha, beta and gamma chain. Complement C4b is composed of complement C4b-A, complement C4 beta and complement C4 gamma chains that are associated via disulfide bonds. Non-enzymatic component of the C3 convertase, also named C4bC2b, composed of the serine protease complement C2b (C2), as well as complement C4b. Non-enzymatic component of the C5 convertase, also named C4bC2bC3b, composed of the serine protease complement C2b (C2), complement C3b, as well as complement C4b. Prior to secretion, the single-chain precursor is enzymatically cleaved by plasminogen (PLG) to yield non-identical chains alpha, beta and gamma. During activation of the complement systems, the alpha chain is cleaved into C4a and C4b by different proteases depending on the complement pathway: C4b stays linked to the beta and gamma chains, while C4a is released in the plasma. The alpha chain is cleaved by C1S to generate C4a and C4b following activation by the classical complement system. The alpha chain is cleaved to generate C4a and C4b by MASP2 following activation by the lectin complement system. The alpha chain is cleaved by GZMK to generate C4a and C4b following activation by the GZMK complement system. Further degradation of C4b by C1 into the inactive fragments C4c and C4d blocks the generation of C3 convertase. The proteolytic cleavages often are incomplete so that many structural forms can be found in plasma. In terms of processing, upon activation, the internal thioester bond reacts with carbohydrate antigens on the target surface to form amide or ester bonds, leading to covalent association with the surface of pathogens. Post-translationally, ser-1236 of complement C4b interacts with complement C3b via a thioester linkage. N- and O-glycosylated. O-glycosylated with a core 1 or possibly core 8 glycan. As to expression, complement component C4 is expressed at highest levels in the liver, at moderate levels in the adrenal cortex, adrenal medulla, thyroid gland, and the kidney, and at lowest levels in the heart, ovary, small intestine, thymus, pancreas and spleen. The extra-hepatic sites of expression may be important for the local protection and inflammatory response.

The protein resides in the secreted. It localises to the synapse. Its subcellular location is the cell projection. The protein localises to the axon. It is found in the dendrite. The protein resides in the cell surface. Specifically inhibited by nanobody hC4Nb8, inhibiting the classical complement pathway. Specifically inhibited by NbB5, NbE11 and NbH9 nanobodies, and to a lesser extent by NbH11 and NbE3 nanobodies. Functionally, precursor of non-enzymatic components of the classical, lectin and GZMK complement pathways, which consist in a cascade of proteins that leads to phagocytosis and breakdown of pathogens and signaling that strengthens the adaptive immune system. In terms of biological role, non-enzymatic component of C3 and C5 convertases. Generated following cleavage by complement proteases (C1S, MASP2 or GZMK, depending on the complement pathway), it covalently attaches to the surface of pathogens, where it acts as an opsonin that marks the surface of antigens for removal. It then recruits the serine protease complement C2b to form the C3 and C5 convertases, which cleave and activate C3 and C5, respectively, the next components of the complement pathways. Complement C4b-A isotype is responsible for effective binding to form amide bonds with immune aggregates or protein antigens, while complement C4b-B isotype catalyzes the transacylation of the thioester carbonyl group to form ester bonds with carbohydrate antigens. Its function is as follows. Putative humoral mediator released following cleavage by complement proteases (C1S, MASP2 or GZMK, depending on the complement pathway). While it is strongly similar to anaphylatoxins, its role is unclear. Was reported to act as a mediator of local inflammatory process; however these effects were probably due to contamination with C3a and/C5a anaphylatoxins in biological assays. The chain is Complement C4-A from Homo sapiens (Human).